Here is a 465-residue protein sequence, read N- to C-terminus: ATP synthase subunit beta (465 aa).

Residue 154 to 161 (GGAGVGKT) participates in ATP binding.

It belongs to the ATPase alpha/beta chains family. As to quaternary structure, F-type ATPases have 2 components, CF(1) - the catalytic core - and CF(0) - the membrane proton channel. CF(1) has five subunits: alpha(3), beta(3), gamma(1), delta(1), epsilon(1). CF(0) has three main subunits: a(1), b(2) and c(9-12). The alpha and beta chains form an alternating ring which encloses part of the gamma chain. CF(1) is attached to CF(0) by a central stalk formed by the gamma and epsilon chains, while a peripheral stalk is formed by the delta and b chains.

It localises to the cell inner membrane. The catalysed reaction is ATP + H2O + 4 H(+)(in) = ADP + phosphate + 5 H(+)(out). Functionally, produces ATP from ADP in the presence of a proton gradient across the membrane. The catalytic sites are hosted primarily by the beta subunits. The chain is ATP synthase subunit beta from Methylobacillus flagellatus (strain ATCC 51484 / DSM 6875 / VKM B-1610 / KT).